A 446-amino-acid polypeptide reads, in one-letter code: Probable tRNA modification GTPase MnmE (446 aa).

Positions 28, 87, and 126 each coordinate (6S)-5-formyl-5,6,7,8-tetrahydrofolate. One can recognise a TrmE-type G domain in the interval 218–373; sequence GIQVALLGPA…LKQLIWQQAT (156 aa). Residue asparagine 228 participates in K(+) binding. Residues 228–233, 247–253, and 272–275 each bind GTP; these read NAGKST, TPIAGTT, and DTAG. Residue serine 232 participates in Mg(2+) binding. Residues threonine 247, isoleucine 249, and threonine 252 each coordinate K(+). Threonine 253 provides a ligand contact to Mg(2+). Residue lysine 446 participates in (6S)-5-formyl-5,6,7,8-tetrahydrofolate binding.

The protein belongs to the TRAFAC class TrmE-Era-EngA-EngB-Septin-like GTPase superfamily. TrmE GTPase family. K(+) serves as cofactor.

It is found in the plastid. It localises to the chloroplast. In terms of biological role, exhibits a very high intrinsic GTPase hydrolysis rate. Involved in the addition of a carboxymethylaminomethyl (cmnm) group at the wobble position (U34) of certain tRNAs, forming tRNA-cmnm(5)s(2)U34. This chain is Probable tRNA modification GTPase MnmE, found in Cyanidioschyzon merolae (strain NIES-3377 / 10D) (Unicellular red alga).